A 265-amino-acid polypeptide reads, in one-letter code: Mlc titration factor A (265 aa).

Residues His111, His148, His152, and Glu211 each contribute to the Zn(2+) site.

Belongs to the MtfA family. In terms of assembly, interacts with Mlc. It depends on Zn(2+) as a cofactor.

It localises to the cytoplasm. Functionally, involved in the modulation of the activity of the glucose-phosphotransferase system (glucose-PTS). Interacts with the transcriptional repressor Mlc, preventing its interaction with DNA and leading to the modulation of expression of genes regulated by Mlc, including ptsG, which encodes the PTS system glucose-specific EIICB component. In terms of biological role, shows zinc-dependent metallopeptidase activity. This Escherichia coli O8 (strain IAI1) protein is Mlc titration factor A.